Reading from the N-terminus, the 726-residue chain is Phenylalanine--tRNA ligase beta subunit (726 aa).

The region spanning 38-150 is the tRNA-binding domain; sequence FSSSKGLLFA…NFASLNDDAS (113 aa). Residues 394-467 enclose the B5 domain; the sequence is DKKVEINFDE…RFYNYDNFKE (74 aa). Residues aspartate 445, aspartate 451, glutamate 454, and glutamate 455 each coordinate Mg(2+).

This sequence belongs to the phenylalanyl-tRNA synthetase beta subunit family. Type 1 subfamily. In terms of assembly, tetramer of two alpha and two beta subunits. It depends on Mg(2+) as a cofactor.

Its subcellular location is the cytoplasm. It carries out the reaction tRNA(Phe) + L-phenylalanine + ATP = L-phenylalanyl-tRNA(Phe) + AMP + diphosphate + H(+). The polypeptide is Phenylalanine--tRNA ligase beta subunit (Mycoplasmopsis synoviae (strain 53) (Mycoplasma synoviae)).